The following is a 421-amino-acid chain: 3-phosphoshikimate 1-carboxyvinyltransferase (421 aa).

3-phosphoshikimate is bound by residues K19, S20, and R24. A phosphoenolpyruvate-binding site is contributed by K19. Phosphoenolpyruvate-binding residues include G88 and R116. The 3-phosphoshikimate site is built by S160, Q162, D307, and K334. Residue Q162 participates in phosphoenolpyruvate binding. D307 serves as the catalytic Proton acceptor. Phosphoenolpyruvate is bound by residues R338 and R380.

It belongs to the EPSP synthase family. Monomer.

It is found in the cytoplasm. It catalyses the reaction 3-phosphoshikimate + phosphoenolpyruvate = 5-O-(1-carboxyvinyl)-3-phosphoshikimate + phosphate. It functions in the pathway metabolic intermediate biosynthesis; chorismate biosynthesis; chorismate from D-erythrose 4-phosphate and phosphoenolpyruvate: step 6/7. Catalyzes the transfer of the enolpyruvyl moiety of phosphoenolpyruvate (PEP) to the 5-hydroxyl of shikimate-3-phosphate (S3P) to produce enolpyruvyl shikimate-3-phosphate and inorganic phosphate. The chain is 3-phosphoshikimate 1-carboxyvinyltransferase from Thermotoga sp. (strain RQ2).